Reading from the N-terminus, the 434-residue chain is MSAGTATDTTDLDSFFSAHLAETDPEIAKAISQELGRQQHEIELIASENIVSRAVLEAQGSVLTNKYAEGYPGRRYYGGCQFVDIAEELAIDRAKRLFGCGFANVQPNSGSQANQGVFMALMQPGDTFLGLDLAAGGHLTHGAPPNVSGKWFKPVSYTVRREDQRIDMEQVERLAQEHKPKVIIAGGSGYPRHWDFAKFREIADSVGAYFFVDMAHFAGLVAAGLHPSPFPHAHVATTTTHKTLRGPRGGMILTNDEALAKKFNSAIFPGLQGGPLMHVIAAKAVAFGEALKPEFKIYAKQVIDNARALADTIISGGYDITSGGTDNHLMLVDLQKKGLTGKAAEAALSRADITCNKNGVPFDPQKPTITSGIRLGTPASTTRGFGVAEFKQVGSLIVQVLDGIAEKGDGGDAAVEAAVKEKVHALTDRFPIYA.

Residues leucine 133 and 137-139 (GHL) each bind (6S)-5,6,7,8-tetrahydrofolate. Position 242 is an N6-(pyridoxal phosphate)lysine (lysine 242).

Belongs to the SHMT family. As to quaternary structure, homodimer. Requires pyridoxal 5'-phosphate as cofactor.

It localises to the cytoplasm. The enzyme catalyses (6R)-5,10-methylene-5,6,7,8-tetrahydrofolate + glycine + H2O = (6S)-5,6,7,8-tetrahydrofolate + L-serine. The protein operates within one-carbon metabolism; tetrahydrofolate interconversion. It participates in amino-acid biosynthesis; glycine biosynthesis; glycine from L-serine: step 1/1. In terms of biological role, catalyzes the reversible interconversion of serine and glycine with tetrahydrofolate (THF) serving as the one-carbon carrier. This reaction serves as the major source of one-carbon groups required for the biosynthesis of purines, thymidylate, methionine, and other important biomolecules. Also exhibits THF-independent aldolase activity toward beta-hydroxyamino acids, producing glycine and aldehydes, via a retro-aldol mechanism. The polypeptide is Serine hydroxymethyltransferase (Methylorubrum extorquens (strain CM4 / NCIMB 13688) (Methylobacterium extorquens)).